A 316-amino-acid polypeptide reads, in one-letter code: Malate dehydrogenase (316 aa).

NAD(+) contacts are provided by residues 12–17 (GAGNIG) and aspartate 36. Residues arginine 85 and arginine 91 each contribute to the substrate site. NAD(+) is bound by residues asparagine 98 and 121–123 (VTN). Positions 123 and 154 each coordinate substrate. Histidine 178 (proton acceptor) is an active-site residue.

It belongs to the LDH/MDH superfamily. MDH type 3 family.

The catalysed reaction is (S)-malate + NAD(+) = oxaloacetate + NADH + H(+). In terms of biological role, catalyzes the reversible oxidation of malate to oxaloacetate. The sequence is that of Malate dehydrogenase from Wolbachia pipientis wMel.